A 338-amino-acid polypeptide reads, in one-letter code: Large ribosomal subunit protein uL10 (338 aa).

Positions 292–338 (LDDDLKERVSSTASAVEAKEEEAPKEEKEEEKEEEEEAPAAGLGMLF) are disordered. A compositionally biased stretch (basic and acidic residues) spans 308 to 318 (EAKEEEAPKEE). Acidic residues predominate over residues 319–329 (KEEEKEEEEEA).

This sequence belongs to the universal ribosomal protein uL10 family. Part of the 50S ribosomal subunit. Forms part of the ribosomal stalk which helps the ribosome interact with GTP-bound translation factors. Forms a heptameric L10(L12)2(L12)2(L12)2 complex, where L10 forms an elongated spine to which the L12 dimers bind in a sequential fashion.

Functionally, forms part of the ribosomal stalk, playing a central role in the interaction of the ribosome with GTP-bound translation factors. The polypeptide is Large ribosomal subunit protein uL10 (Methanococcus aeolicus (strain ATCC BAA-1280 / DSM 17508 / OCM 812 / Nankai-3)).